Consider the following 328-residue polypeptide: Endo-beta-1,4-glucanase B (328 aa).

Residues 1–17 (MKVNTLLVAVAAGTAMA) form the signal peptide. An N-linked (GlcNAc...) asparagine glycan is attached at asparagine 95. Catalysis depends on glutamate 155, which acts as the Proton donor. Glutamate 262 serves as the catalytic Nucleophile.

The protein belongs to the glycosyl hydrolase 5 (cellulase A) family.

It localises to the secreted. It catalyses the reaction Endohydrolysis of (1-&gt;4)-beta-D-glucosidic linkages in cellulose, lichenin and cereal beta-D-glucans.. Has endoglucanase activity on substrates containing beta-1,4 glycosidic bonds, like in carboxymethylcellulose (CMC), hydroxyethylcellulose (HEC) and beta-glucan. Involved in the degradation of complex natural cellulosic substrates. The sequence is that of Endo-beta-1,4-glucanase B (eglB) from Emericella nidulans (strain FGSC A4 / ATCC 38163 / CBS 112.46 / NRRL 194 / M139) (Aspergillus nidulans).